Consider the following 610-residue polypeptide: Zinc metalloproteinase-disintegrin-like bothropasin (610 aa).

An N-terminal signal peptide occupies residues 1-20 (MIEVLLVTICLAAFPYQGSS). Positions 21 to 191 (IILESGNVND…ASQLVVTAEQ (171 aa)) are excised as a propeptide. A Pyrrolidone carboxylic acid modification is found at Gln-192. The Peptidase M12B domain occupies 198-394 (RYVELFIVVD…ENPQCILNEP (197 aa)). The Ca(2+) site is built by Glu-201 and Asp-285. Disulfide bonds link Cys-309–Cys-389, Cys-349–Cys-373, and Cys-351–Cys-356. His-334 is a binding site for Zn(2+). The active site involves Glu-335. 2 residues coordinate Zn(2+): His-338 and His-344. An N-linked (GlcNAc...) asparagine glycan is attached at Asn-372. Ca(2+)-binding residues include Cys-389, Asn-392, Val-404, Asn-407, Leu-409, Glu-411, Glu-414, and Asp-417. The region spanning 402 to 488 (PPVCGNELLE…ECPADVFHKN (87 aa)) is the Disintegrin domain. 22 disulfides stabilise this stretch: Cys-405–Cys-424, Cys-405–Cys-434, Cys-416–Cys-429, Cys-416–Cys-434, Cys-418–Cys-424, Cys-428–Cys-451, Cys-442–Cys-448, Cys-447–Cys-473, Cys-460–Cys-480, Cys-467–Cys-492, Cys-467–Cys-499, Cys-492–Cys-504, Cys-499–Cys-504, Cys-511–Cys-526, Cys-511–Cys-561, Cys-526–Cys-572, Cys-539–Cys-549, Cys-549–Cys-556, Cys-556–Cys-598, Cys-561–Cys-572, Cys-592–Cys-603, and Cys-598–Cys-603. The short motif at 466 to 468 (ECD) is the D/ECD-tripeptide element. Ca(2+) is bound by residues Asp-468, Pro-469, Glu-471, Asp-483, and Val-484.

It belongs to the venom metalloproteinase (M12B) family. P-III subfamily. P-IIIb sub-subfamily. As to quaternary structure, monomer. Requires Zn(2+) as cofactor. As to expression, expressed by the venom gland.

The protein resides in the secreted. It carries out the reaction Cleavage of 5-His-|-Leu-6, 10-His-|-Leu-11, 14-Ala-|-Leu-15, 16-Tyr-|-Leu-17 and 24-Phe-|-Phe-25 in insulin B chain.. With respect to regulation, inhibited by EDTA and EGTA. Has caseinolytic activity. Causes hemorrhage on rabbit skin and causes myonecrosis in mouse tibialis anterior muscle. In terms of biological role, inhibits platelet aggregation. The chain is Zinc metalloproteinase-disintegrin-like bothropasin from Bothrops jararaca (Jararaca).